A 211-amino-acid chain; its full sequence is Protein-L-isoaspartate O-methyltransferase (211 aa).

Serine 62 is a catalytic residue.

The protein belongs to the methyltransferase superfamily. L-isoaspartyl/D-aspartyl protein methyltransferase family.

The protein localises to the cytoplasm. The catalysed reaction is [protein]-L-isoaspartate + S-adenosyl-L-methionine = [protein]-L-isoaspartate alpha-methyl ester + S-adenosyl-L-homocysteine. Its function is as follows. Catalyzes the methyl esterification of L-isoaspartyl residues in peptides and proteins that result from spontaneous decomposition of normal L-aspartyl and L-asparaginyl residues. It plays a role in the repair and/or degradation of damaged proteins. This chain is Protein-L-isoaspartate O-methyltransferase, found in Shewanella woodyi (strain ATCC 51908 / MS32).